The chain runs to 568 residues: Glucose-6-phosphate isomerase, cytosolic 1 (568 aa).

The Proton donor role is filled by glutamate 360. Residues histidine 391 and lysine 516 contribute to the active site.

It belongs to the GPI family. In terms of assembly, homodimer.

The protein resides in the cytoplasm. It carries out the reaction alpha-D-glucose 6-phosphate = beta-D-fructose 6-phosphate. Its pathway is carbohydrate degradation; glycolysis; D-glyceraldehyde 3-phosphate and glycerone phosphate from D-glucose: step 2/4. The chain is Glucose-6-phosphate isomerase, cytosolic 1 (PGIC1) from Clarkia xantiana (Gunsight clarkia).